The sequence spans 72 residues: Sperm protein associated with the nucleus on the X chromosome N1 (72 aa).

Residues 1 to 44 (MEQPTSSINGEKRKSPCESNNENDEMQETPNRDLAPEPSLKKMK) are disordered.

It belongs to the SPAN-X family.

The protein is Sperm protein associated with the nucleus on the X chromosome N1 (SPANXN1) of Homo sapiens (Human).